Consider the following 677-residue polypeptide: Transketolase 1 (677 aa).

Histidine 27 lines the substrate pocket. Thiamine diphosphate-binding positions include histidine 66 and 114-116; that span reads GPL. Aspartate 155 contacts Mg(2+). 2 residues coordinate thiamine diphosphate: glycine 156 and asparagine 185. Positions 185 and 187 each coordinate Mg(2+). Positions 261, 356, and 383 each coordinate substrate. Thiamine diphosphate is bound at residue histidine 261. Thiamine diphosphate contacts are provided by glutamate 415 and phenylalanine 442. The active-site Proton donor is the glutamate 415. Substrate is bound by residues histidine 466, aspartate 474, and arginine 525.

It belongs to the transketolase family. In terms of assembly, homodimer. The cofactor is Mg(2+). Requires Ca(2+) as cofactor. Mn(2+) serves as cofactor. It depends on Co(2+) as a cofactor. Thiamine diphosphate is required as a cofactor.

The enzyme catalyses D-sedoheptulose 7-phosphate + D-glyceraldehyde 3-phosphate = aldehydo-D-ribose 5-phosphate + D-xylulose 5-phosphate. Catalyzes the transfer of a two-carbon ketol group from a ketose donor to an aldose acceptor, via a covalent intermediate with the cofactor thiamine pyrophosphate. In Candida albicans (Yeast), this protein is Transketolase 1 (TKT1).